The primary structure comprises 518 residues: MFS-type transporter cnsO (518 aa).

The segment covering methionine 1–threonine 13 has biased composition (polar residues). A disordered region spans residues methionine 1 to threonine 24. A run of 9 helical transmembrane segments spans residues leucine 99–leucine 119, valine 122–threonine 142, leucine 156–tryptophan 176, alanine 187–valine 207, tryptophan 221–leucine 241, phenylalanine 298–leucine 318, valine 334–serine 354, leucine 362–valine 382, and tyrosine 392–tryptophan 412. Asparagine 416 is a glycosylation site (N-linked (GlcNAc...) asparagine). A run of 2 helical transmembrane segments spans residues isoleucine 427–isoleucine 447 and proline 455–isoleucine 475.

This sequence belongs to the major facilitator superfamily.

Its subcellular location is the cell membrane. In terms of biological role, MFS-type transporter; part of the gene cluster that mediates the biosynthesis of communesins, a prominent class of indole alkaloids with great potential as pharmaceuticals. With the MFS transporter cnsL, is most likely responsible for cummunesins secretion and thereby may contribute to intrinsic resistance. This chain is MFS-type transporter cnsO, found in Penicillium expansum (Blue mold rot fungus).